A 241-amino-acid polypeptide reads, in one-letter code: MDSDIMNMMMHQMEKLPEFCNPNSSFFSPDHNNTYPFLFNSTHYQSDHSMTNEPGFRYGSGLLTNPSSISPNTAYSSVFLDKRNNSNNNNNGTNMAAMREMIFRIAVMQPIHIDPEAVKPPKRRNVRISKDPQSVAARHRRERISERIRILQRLVPGGTKMDTASMLDEAIHYVKFLKKQVQSLEEQAVVTGGGGGGGGRVLIGGGGMTAASGGGGGGGVVMKGCGTVGTHQMVGNAQILR.

The bHLH domain occupies 128–177 (ISKDPQSVAARHRRERISERIRILQRLVPGGTKMDTASMLDEAIHYVKFL).

Homodimer. Interacts with SPT. Interacts with BZIP30. As to expression, flowers, especially in gynoecium.

The protein localises to the nucleus. In terms of biological role, required for the female reproductive tract development and fertility. The sequence is that of Transcription factor HEC1 (HEC1) from Arabidopsis thaliana (Mouse-ear cress).